A 354-amino-acid polypeptide reads, in one-letter code: 3-dehydroquinate synthase (354 aa).

NAD(+) contacts are provided by residues 100–104 (GATGD), 124–125 (TT), K136, K145, and 163–166 (FLKT). Residues E178, H242, and H256 each coordinate Zn(2+).

Belongs to the sugar phosphate cyclases superfamily. Dehydroquinate synthase family. Requires Co(2+) as cofactor. The cofactor is Zn(2+). NAD(+) is required as a cofactor.

It localises to the cytoplasm. The enzyme catalyses 7-phospho-2-dehydro-3-deoxy-D-arabino-heptonate = 3-dehydroquinate + phosphate. Its pathway is metabolic intermediate biosynthesis; chorismate biosynthesis; chorismate from D-erythrose 4-phosphate and phosphoenolpyruvate: step 2/7. Catalyzes the conversion of 3-deoxy-D-arabino-heptulosonate 7-phosphate (DAHP) to dehydroquinate (DHQ). This Staphylococcus aureus (strain NCTC 8325 / PS 47) protein is 3-dehydroquinate synthase.